Consider the following 130-residue polypeptide: Small ribosomal subunit protein uS9 (130 aa).

Residues L98 to R130 are disordered. The span at K111 to R130 shows a compositional bias: basic residues.

It belongs to the universal ribosomal protein uS9 family.

The polypeptide is Small ribosomal subunit protein uS9 (Sorangium cellulosum (strain So ce56) (Polyangium cellulosum (strain So ce56))).